Here is an 898-residue protein sequence, read N- to C-terminus: Histone-lysine N-methyltransferase mes-4 (898 aa).

The tract at residues 1–68 (MLPSSGDSSK…APILTNAPKD (68 aa)) is disordered. Positions 36–51 (QRNATPQGAGSETSSN) are enriched in polar residues. 2 PHD-type zinc fingers span residues 126–214 (DSKC…CNLD) and 303–355 (IKAC…CVCG). The 129-residue stretch at 537 to 665 (EKIKLAATLC…DGDEITFSYN (129 aa)) folds into the SET domain. The Post-SET domain occupies 671 to 687 (NLPDCECGAENCMGTMG). Residues 689–847 (AKREKPEVAD…SLQTIQETGK (159 aa)) form a disordered region. Basic and acidic residues predominate over residues 692–704 (EKPEVADSSEKAA). Residues 705–719 (KKNKSSKKKSVKNQN) are compositionally biased toward basic residues. Composition is skewed to low complexity over residues 737 to 751 (ISPS…SSTS) and 761 to 773 (SQNK…NSNQ). Positions 774-788 (PVADTGSTLSTSTEL) are enriched in polar residues. The segment covering 802–811 (SSRSRAASSS) has biased composition (low complexity).

Belongs to the class V-like SAM-binding methyltransferase superfamily. Histone-lysine methyltransferase family. SET2 subfamily. In terms of tissue distribution, in adults, it is predominantly expressed in the germline, and weakly expressed in intestinal cells.

Its subcellular location is the nucleus. The protein resides in the chromosome. It catalyses the reaction L-lysyl(36)-[histone H3] + 2 S-adenosyl-L-methionine = N(6),N(6)-dimethyl-L-lysyl(36)-[histone H3] + 2 S-adenosyl-L-homocysteine + 2 H(+). In terms of biological role, histone methyltransferase. Dimethylates 'Lys-36' of histone H3, a specific tag for epigenetic transcriptional activation. Plays a central role in early development and is responsible for all H3 'Lys-36' dimethylation until about the 40-cell stage. Indirectly involved in the global inactivation of the X chromosomes in germline cells, possibly by excluding the mes-2-mes-3-mes-6 repressive Polycomb complex from the autosomes. Not related to transcription elongation. Required for small-RNA-induced H3K27 trimethylation. May suppress sensitivity to RNAi. May regulate the expression of genes required for vulval development. This Caenorhabditis elegans protein is Histone-lysine N-methyltransferase mes-4.